We begin with the raw amino-acid sequence, 630 residues long: Arginine--tRNA ligase (630 aa).

Residues 120-130 (ANPVHPLHIGH) carry the 'HIGH' region motif.

The protein belongs to the class-I aminoacyl-tRNA synthetase family.

It localises to the cytoplasm. It catalyses the reaction tRNA(Arg) + L-arginine + ATP = L-arginyl-tRNA(Arg) + AMP + diphosphate. The chain is Arginine--tRNA ligase from Pyrobaculum aerophilum (strain ATCC 51768 / DSM 7523 / JCM 9630 / CIP 104966 / NBRC 100827 / IM2).